Reading from the N-terminus, the 228-residue chain is uncharacterized protein (228 aa).

This is an uncharacterized protein from Ictalurid herpesvirus 1 (strain Auburn) (IcHV-1).